Here is a 126-residue protein sequence, read N- to C-terminus: UPF0102 protein HD_0802 (126 aa).

The protein belongs to the UPF0102 family.

The polypeptide is UPF0102 protein HD_0802 (Haemophilus ducreyi (strain 35000HP / ATCC 700724)).